A 154-amino-acid chain; its full sequence is AP-1 complex subunit sigma-3 (154 aa).

It belongs to the adaptor complexes small subunit family. In terms of assembly, adaptor protein complex 1 (AP-1) is a heterotetramer composed of two large adaptins (gamma-type subunit AP1G1 and beta-type subunit AP1B1), a medium adaptin (mu-type subunit AP1M1 or AP1M2) and a small adaptin (sigma-type subunit AP1S1 or AP1S2 or AP1S3). Widely expressed.

The protein localises to the golgi apparatus. Its subcellular location is the cytoplasmic vesicle membrane. The protein resides in the membrane. It is found in the clathrin-coated pit. Its function is as follows. Subunit of clathrin-associated adaptor protein complex 1 that plays a role in protein sorting in the late-Golgi/trans-Golgi network (TGN) and/or endosomes. The AP complexes mediate both the recruitment of clathrin to membranes and the recognition of sorting signals within the cytosolic tails of transmembrane cargo molecules. Involved in TLR3 trafficking. This Homo sapiens (Human) protein is AP-1 complex subunit sigma-3 (AP1S3).